We begin with the raw amino-acid sequence, 260 residues long: Hydroxyethylthiazole kinase (260 aa).

Residue methionine 49 coordinates substrate. ATP contacts are provided by arginine 124 and threonine 170. Glycine 197 provides a ligand contact to substrate.

Belongs to the Thz kinase family. Mg(2+) is required as a cofactor.

It carries out the reaction 5-(2-hydroxyethyl)-4-methylthiazole + ATP = 4-methyl-5-(2-phosphooxyethyl)-thiazole + ADP + H(+). It participates in cofactor biosynthesis; thiamine diphosphate biosynthesis; 4-methyl-5-(2-phosphoethyl)-thiazole from 5-(2-hydroxyethyl)-4-methylthiazole: step 1/1. Its function is as follows. Catalyzes the phosphorylation of the hydroxyl group of 4-methyl-5-beta-hydroxyethylthiazole (THZ). This chain is Hydroxyethylthiazole kinase, found in Yersinia enterocolitica serotype O:8 / biotype 1B (strain NCTC 13174 / 8081).